Reading from the N-terminus, the 358-residue chain is Probable tartrate dehydrogenase/decarboxylase TtuC' (358 aa).

Positions 222, 246, and 250 each coordinate Mn(2+).

This sequence belongs to the isocitrate and isopropylmalate dehydrogenases family. Mg(2+) serves as cofactor. Requires Mn(2+) as cofactor. K(+) is required as a cofactor.

It is found in the cytoplasm. It carries out the reaction tartrate + NAD(+) = 2-hydroxy-3-oxosuccinate + NADH + H(+). It catalyses the reaction (2R,3S)-tartrate + NAD(+) = 2-hydroxy-3-oxosuccinate + NADH + H(+). The catalysed reaction is (2R,3R)-tartrate + NAD(+) = 2-hydroxy-3-oxosuccinate + NADH + H(+). The enzyme catalyses (2R,3R)-tartrate + H(+) = (R)-glycerate + CO2. It carries out the reaction (R)-malate + NAD(+) = pyruvate + CO2 + NADH. It participates in carbohydrate acid metabolism; tartrate degradation; 2-hydroxy-3-oxosuccinate from L-tartrate: step 1/1. Its pathway is carbohydrate acid metabolism; tartrate degradation; 2-hydroxy-3-oxosuccinate from meso-tartrate: step 1/1. The protein operates within carbohydrate acid metabolism; tartrate degradation; D-glycerate from L-tartrate: step 1/1. Has multiple catalytic activities. Apart from catalyzing the oxidation of (+)-tartrate to oxaloglycolate, also converts meso-tartrate to D-glycerate and catalyzes the oxidative decarboxylation of D-malate to pyruvate. The sequence is that of Probable tartrate dehydrogenase/decarboxylase TtuC' (ttuC') from Agrobacterium vitis (Rhizobium vitis).